A 317-amino-acid chain; its full sequence is tRNA dimethylallyltransferase (317 aa).

An ATP-binding site is contributed by 21–28 (GPTASGKS). 23 to 28 (TASGKS) serves as a coordination point for substrate. An interaction with substrate tRNA region spans residues 46–49 (DSMQ).

It belongs to the IPP transferase family. As to quaternary structure, monomer. Requires Mg(2+) as cofactor.

It catalyses the reaction adenosine(37) in tRNA + dimethylallyl diphosphate = N(6)-dimethylallyladenosine(37) in tRNA + diphosphate. Functionally, catalyzes the transfer of a dimethylallyl group onto the adenine at position 37 in tRNAs that read codons beginning with uridine, leading to the formation of N6-(dimethylallyl)adenosine (i(6)A). The polypeptide is tRNA dimethylallyltransferase (Nitrobacter hamburgensis (strain DSM 10229 / NCIMB 13809 / X14)).